An 89-amino-acid polypeptide reads, in one-letter code: Small ribosomal subunit protein uS15 (89 aa).

The protein belongs to the universal ribosomal protein uS15 family. Part of the 30S ribosomal subunit. Forms a bridge to the 50S subunit in the 70S ribosome, contacting the 23S rRNA.

Its function is as follows. One of the primary rRNA binding proteins, it binds directly to 16S rRNA where it helps nucleate assembly of the platform of the 30S subunit by binding and bridging several RNA helices of the 16S rRNA. Functionally, forms an intersubunit bridge (bridge B4) with the 23S rRNA of the 50S subunit in the ribosome. This Acidithiobacillus ferrooxidans (strain ATCC 23270 / DSM 14882 / CIP 104768 / NCIMB 8455) (Ferrobacillus ferrooxidans (strain ATCC 23270)) protein is Small ribosomal subunit protein uS15.